The sequence spans 162 residues: AP-1 complex subunit sigma-1 (162 aa).

It belongs to the adaptor complexes small subunit family. As to quaternary structure, adaptor protein complex 1 (AP-1) is a heterotetramer composed of two large adaptins (gamma-type subunit apl4 and beta-type subunit apl2), a medium adaptin (mu-type subunit apm1) and a small adaptin (sigma-type subunit aps1). AP-1 interacts with clathrin.

The protein resides in the cytoplasm. It localises to the nucleus. The protein localises to the cytoplasmic vesicle. Its subcellular location is the clathrin-coated vesicle membrane. It is found in the endosome. The protein resides in the golgi apparatus. In terms of biological role, component of the AP-1 complex which links clathrin to receptors in coated vesicles. Clathrin-associated protein complexes are believed to interact with the cytoplasmic tails of membrane proteins, leading to their selection and concentration. This Schizosaccharomyces pombe (strain 972 / ATCC 24843) (Fission yeast) protein is AP-1 complex subunit sigma-1 (vas2).